The sequence spans 203 residues: MTNASDDFTESSQPFKLFADWLTDAKASEPNDPNAVALATVDPDGLPNVRMVLLKDFDEQGFVFYTNYESTKGKEILSAEKAAMCFHWKTLRRQVRVRGAVEKVSDAEADAYYASRPRGSRIGAWASKQSRPLESRFALEKAVAEYTAKYAIGDIPRPSYWSGFRIRPVSIEFWHDRAFRLHDRVLFTRPAPEGDWNKERLYP.

Residues 50–55 (RMVLLK), 65–66 (YT), lysine 72, and glutamine 94 contribute to the FMN site. Lysine 55 serves as a coordination point for substrate. Tyrosine 112, arginine 116, and serine 120 together coordinate substrate. FMN-binding positions include 129–130 (QS) and tryptophan 174. 180 to 182 (RLH) lines the substrate pocket. Arginine 184 provides a ligand contact to FMN.

Belongs to the pyridoxamine 5'-phosphate oxidase family. As to quaternary structure, homodimer. It depends on FMN as a cofactor.

It catalyses the reaction pyridoxamine 5'-phosphate + O2 + H2O = pyridoxal 5'-phosphate + H2O2 + NH4(+). The enzyme catalyses pyridoxine 5'-phosphate + O2 = pyridoxal 5'-phosphate + H2O2. It functions in the pathway cofactor metabolism; pyridoxal 5'-phosphate salvage; pyridoxal 5'-phosphate from pyridoxamine 5'-phosphate: step 1/1. It participates in cofactor metabolism; pyridoxal 5'-phosphate salvage; pyridoxal 5'-phosphate from pyridoxine 5'-phosphate: step 1/1. In terms of biological role, catalyzes the oxidation of either pyridoxine 5'-phosphate (PNP) or pyridoxamine 5'-phosphate (PMP) into pyridoxal 5'-phosphate (PLP). In Brucella anthropi (strain ATCC 49188 / DSM 6882 / CCUG 24695 / JCM 21032 / LMG 3331 / NBRC 15819 / NCTC 12168 / Alc 37) (Ochrobactrum anthropi), this protein is Pyridoxine/pyridoxamine 5'-phosphate oxidase.